Consider the following 371-residue polypeptide: Probable F-box protein At1g65740 (371 aa).

An F-box domain is found at Val-2–Arg-49.

The polypeptide is Probable F-box protein At1g65740 (Arabidopsis thaliana (Mouse-ear cress)).